We begin with the raw amino-acid sequence, 483 residues long: Glutamate--tRNA ligase (483 aa).

The 'HIGH' region motif lies at 11–21; that stretch reads PSPTGLLHIGN. The short motif at 255 to 259 is the 'KMSKS' region element; that stretch reads KLSKR. Lysine 258 serves as a coordination point for ATP.

The protein belongs to the class-I aminoacyl-tRNA synthetase family. Glutamate--tRNA ligase type 1 subfamily. As to quaternary structure, monomer.

The protein resides in the cytoplasm. The catalysed reaction is tRNA(Glu) + L-glutamate + ATP = L-glutamyl-tRNA(Glu) + AMP + diphosphate. Catalyzes the attachment of glutamate to tRNA(Glu) in a two-step reaction: glutamate is first activated by ATP to form Glu-AMP and then transferred to the acceptor end of tRNA(Glu). The protein is Glutamate--tRNA ligase of Lactococcus lactis subsp. cremoris (strain SK11).